We begin with the raw amino-acid sequence, 427 residues long: SAC3 domain-containing protein 1 (427 aa).

Composition is skewed to basic and acidic residues over residues 1-10 and 117-127; these read MGRFKGENRS and ADPKRTVKEYS. Disordered regions lie at residues 1–53 and 101–143; these read MGRF…QDAV and LHRL…LLRP. Residues 134-143 show a composition bias toward pro residues; that stretch reads PRPPPSLLRP. The 169-residue stretch at 229–397 folds into the PCI domain; sequence QVQEGFGSLR…EGLPPPGAYH (169 aa). At Ser-425 the chain carries Phosphoserine.

Belongs to the SAC3 family. May be part of a SEM1-containing complex. In terms of tissue distribution, present in spleen cells (at protein level).

It localises to the cytoplasm. It is found in the cytoskeleton. The protein resides in the microtubule organizing center. The protein localises to the centrosome. Its subcellular location is the spindle. Its function is as follows. Involved in centrosome duplication and mitotic progression. This chain is SAC3 domain-containing protein 1 (Sac3d1), found in Mus musculus (Mouse).